The chain runs to 1355 residues: DNA-directed RNA polymerase subunit beta' (1355 aa).

Zn(2+) is bound by residues Cys-219, Cys-293, Cys-300, and Cys-303. Residues 1331-1355 (AEVEVDDEVDDDYEDDDEDDDDYED) are disordered.

It belongs to the RNA polymerase beta' chain family. RpoC2 subfamily. In terms of assembly, in cyanobacteria the RNAP catalytic core is composed of 2 alpha, 1 beta, 1 beta', 1 gamma and 1 omega subunit. When a sigma factor is associated with the core the holoenzyme is formed, which can initiate transcription. The cofactor is Zn(2+).

The catalysed reaction is RNA(n) + a ribonucleoside 5'-triphosphate = RNA(n+1) + diphosphate. In terms of biological role, DNA-dependent RNA polymerase catalyzes the transcription of DNA into RNA using the four ribonucleoside triphosphates as substrates. The polypeptide is DNA-directed RNA polymerase subunit beta' (Trichormus variabilis (strain ATCC 29413 / PCC 7937) (Anabaena variabilis)).